The following is a 256-amino-acid chain: Trans-aconitate 2-methyltransferase (256 aa).

The protein belongs to the methyltransferase superfamily. Tam family.

It is found in the cytoplasm. It carries out the reaction trans-aconitate + S-adenosyl-L-methionine = (E)-3-(methoxycarbonyl)pent-2-enedioate + S-adenosyl-L-homocysteine. Its function is as follows. Catalyzes the S-adenosylmethionine monomethyl esterification of trans-aconitate. The sequence is that of Trans-aconitate 2-methyltransferase from Rhizobium rhizogenes (strain K84 / ATCC BAA-868) (Agrobacterium radiobacter).